Here is a 127-residue protein sequence, read N- to C-terminus: Large ribosomal subunit protein bL12 (127 aa).

The protein belongs to the bacterial ribosomal protein bL12 family. As to quaternary structure, homodimer. Part of the ribosomal stalk of the 50S ribosomal subunit. Forms a multimeric L10(L12)X complex, where L10 forms an elongated spine to which 2 to 4 L12 dimers bind in a sequential fashion. Binds GTP-bound translation factors.

In terms of biological role, forms part of the ribosomal stalk which helps the ribosome interact with GTP-bound translation factors. Is thus essential for accurate translation. The chain is Large ribosomal subunit protein bL12 from Streptomyces coelicolor (strain ATCC BAA-471 / A3(2) / M145).